A 193-amino-acid polypeptide reads, in one-letter code: MGLVFNNSTIVAPQAKGIIDPNTSKLIGANDQFFQDMNAELSDKGFLVTSVDSLITWARTGSLMWMSFGLACCAVEMMQCSMPHYDNERFGYAPRASPRQSDVMVVAGTLTNKMAPALRKVYDQMPEPRYVISMGSCANGGGYYHYSYSVVRGCDRIVPVDIYVPGCPPTAEALLYGILLLQKKIRRTGSIER.

[4Fe-4S] cluster-binding residues include Cys72, Cys73, Cys137, and Cys167.

This sequence belongs to the complex I 20 kDa subunit family. As to quaternary structure, NDH-1 is composed of 14 different subunits. Subunits NuoB, C, D, E, F, and G constitute the peripheral sector of the complex. It depends on [4Fe-4S] cluster as a cofactor.

Its subcellular location is the cell inner membrane. It carries out the reaction a quinone + NADH + 5 H(+)(in) = a quinol + NAD(+) + 4 H(+)(out). Its function is as follows. NDH-1 shuttles electrons from NADH, via FMN and iron-sulfur (Fe-S) centers, to quinones in the respiratory chain. The immediate electron acceptor for the enzyme in this species is believed to be ubiquinone. Couples the redox reaction to proton translocation (for every two electrons transferred, four hydrogen ions are translocated across the cytoplasmic membrane), and thus conserves the redox energy in a proton gradient. This Bartonella bacilliformis (strain ATCC 35685 / KC583 / Herrer 020/F12,63) protein is NADH-quinone oxidoreductase subunit B.